Reading from the N-terminus, the 141-residue chain is Hemoglobin subunit alpha-A (141 aa).

The Globin domain occupies 1-141; that stretch reads VLSAADKTNV…VSTVLTAKYR (141 aa). Residue His58 participates in O2 binding. His87 contacts heme b.

This sequence belongs to the globin family. Heterotetramer of two alpha chains and two beta chains. As to expression, red blood cells.

Involved in oxygen transport from the lung to the various peripheral tissues. The sequence is that of Hemoglobin subunit alpha-A (HBAA) from Eudynamys scolopaceus (Western koel).